Reading from the N-terminus, the 406-residue chain is MLQMPSKQPISAGIVIVAAGRGERAGSSKEGPKQYRMIGGKPVIVHTLENFMTWEPATEIVVVIHPDDEALFARALRHIISATPIETVHGGPTRQQSVLAGLRHLKDKRISHVLIHDAVRPFFDHVLLDRIAESLDNGAQAVLPAIPVTDTLKRADSAGTVLTTVSREHLYAAQTPQSFAFETILDAHEKAAASGRSDFTDDASIAEWAGIPVTIVAGTPDNVKLTVKKDIAMADDKLSASLLPDVRTGNGYDVHQLEAGDGVTLCGVFIPHDQKLKGHSDADVALHALTDALLATCGAGDIGDHFPPSDPQWKGAASRIFIEHAARIVREHGGTIMNADVSLIAEAPKVGPHRESMRMRLSEYLGIDIERCSVKATTNETIGFVGRREGIAAIATATVVYRGVKR.

The segment at 1-246 (MLQMPSKQPI…KLSASLLPDV (246 aa)) is 2-C-methyl-D-erythritol 4-phosphate cytidylyltransferase. Residues 247–406 (RTGNGYDVHQ…ATVVYRGVKR (160 aa)) are 2-C-methyl-D-erythritol 2,4-cyclodiphosphate synthase. Aspartate 253 and histidine 255 together coordinate a divalent metal cation. Residues 253–255 (DVH) and 279–280 (HS) contribute to the 4-CDP-2-C-methyl-D-erythritol 2-phosphate site. Histidine 287 is an a divalent metal cation binding site. 4-CDP-2-C-methyl-D-erythritol 2-phosphate contacts are provided by residues 301–303 (DIG), 377–380 (TTNE), phenylalanine 384, and arginine 387.

This sequence in the N-terminal section; belongs to the IspD/TarI cytidylyltransferase family. IspD subfamily. In the C-terminal section; belongs to the IspF family. A divalent metal cation is required as a cofactor.

The catalysed reaction is 2-C-methyl-D-erythritol 4-phosphate + CTP + H(+) = 4-CDP-2-C-methyl-D-erythritol + diphosphate. The enzyme catalyses 4-CDP-2-C-methyl-D-erythritol 2-phosphate = 2-C-methyl-D-erythritol 2,4-cyclic diphosphate + CMP. Its pathway is isoprenoid biosynthesis; isopentenyl diphosphate biosynthesis via DXP pathway; isopentenyl diphosphate from 1-deoxy-D-xylulose 5-phosphate: step 2/6. It functions in the pathway isoprenoid biosynthesis; isopentenyl diphosphate biosynthesis via DXP pathway; isopentenyl diphosphate from 1-deoxy-D-xylulose 5-phosphate: step 4/6. Bifunctional enzyme that catalyzes the formation of 4-diphosphocytidyl-2-C-methyl-D-erythritol from CTP and 2-C-methyl-D-erythritol 4-phosphate (MEP) (IspD), and catalyzes the conversion of 4-diphosphocytidyl-2-C-methyl-D-erythritol 2-phosphate (CDP-ME2P) to 2-C-methyl-D-erythritol 2,4-cyclodiphosphate (ME-CPP) with a corresponding release of cytidine 5-monophosphate (CMP) (IspF). This chain is Bifunctional enzyme IspD/IspF, found in Rhizobium leguminosarum bv. trifolii (strain WSM2304).